The chain runs to 87 residues: MIRVGLILCCIFIAGVFEASSADDMLTAHNLIKRSEVKPPSSSEFIGLMGRSEELTRRLIQHPGSMSETSKRGPPKKVSRRPYILKK.

The signal sequence occupies residues 1–22; the sequence is MIRVGLILCCIFIAGVFEASSA. The propeptide occupies 23-37; the sequence is DDMLTAHNLIKRSEV. Residue Met-49 is modified to Methionine amide. The propeptide occupies 52–87; it reads SEELTRRLIQHPGSMSETSKRGPPKKVSRRPYILKK. A disordered region spans residues 61–87; it reads QHPGSMSETSKRGPPKKVSRRPYILKK. Residues 73–87 are compositionally biased toward basic residues; that stretch reads GPPKKVSRRPYILKK.

Belongs to the tachykinin family. In terms of tissue distribution, expressed in the posterior salivary gland and more specifically in the mucus-secreting gland cells.

The protein localises to the secreted. Its function is as follows. Tachykinins are active peptides which excite neurons, evoke behavioral responses, are potent vasodilators and secretagogues, and contract (directly or indirectly) many smooth muscles. The chain is Tachykinin-1 from Octopus vulgaris (Common octopus).